A 432-amino-acid chain; its full sequence is Glutamyl-tRNA reductase (432 aa).

Substrate contacts are provided by residues 49–52, serine 101, 106–108, and glutamine 112; these read TCNR and EPQ. Cysteine 50 (nucleophile) is an active-site residue. 181-186 is a binding site for NADP(+); it reads GAGETI. Positions 408-432 are disordered; the sequence is PEKPGYRHPPVATPIVRTDDANPAP.

The protein belongs to the glutamyl-tRNA reductase family. As to quaternary structure, homodimer.

It catalyses the reaction (S)-4-amino-5-oxopentanoate + tRNA(Glu) + NADP(+) = L-glutamyl-tRNA(Glu) + NADPH + H(+). It functions in the pathway porphyrin-containing compound metabolism; protoporphyrin-IX biosynthesis; 5-aminolevulinate from L-glutamyl-tRNA(Glu): step 1/2. Functionally, catalyzes the NADPH-dependent reduction of glutamyl-tRNA(Glu) to glutamate 1-semialdehyde (GSA). The protein is Glutamyl-tRNA reductase of Xanthomonas campestris pv. campestris (strain 8004).